The sequence spans 301 residues: Probable alpha-L-glutamate ligase (301 aa).

The ATP-grasp domain maps to 104 to 287 (MQLLSRKGIG…VAGLIVDFIE (184 aa)). ATP is bound by residues Lys141, 178-179 (EF), Asp187, and 211-213 (RSN). Residues Asp248, Glu260, and Asn262 each coordinate Mg(2+). Mn(2+) contacts are provided by Asp248, Glu260, and Asn262.

It belongs to the RimK family. Mg(2+) serves as cofactor. Mn(2+) is required as a cofactor.

This chain is Probable alpha-L-glutamate ligase, found in Aliivibrio salmonicida (strain LFI1238) (Vibrio salmonicida (strain LFI1238)).